A 130-amino-acid polypeptide reads, in one-letter code: MIGEWNNGTGRRKSSVARVFLKKGTGKITVNGKDIQEFFGRETSIMIAKQPLVLTNNLEAFDVMVNVNGGGESGQAGATRHGITRALIDYDASLKPVLSQAGYVTRDAREVERKKVGLHSARRRKQFSKR.

This sequence belongs to the universal ribosomal protein uS9 family.

This is Small ribosomal subunit protein uS9 from Variovorax paradoxus (strain S110).